The primary structure comprises 943 residues: Netrin receptor UNC5B-a (943 aa).

The signal sequence occupies residues 1 to 30; the sequence is MYLSRNPSGAALAAILVALILSCNFPSSTA. Residues 31 to 380 are Extracellular-facing; it reads GIEYSDVLPD…LESTGDVALY (350 aa). Positions 51 to 148 constitute an Ig-like domain; the sequence is PHFLLEPEDA…AGTTKSKRSY (98 aa). 9 disulfide bridges follow: C72-C133, C84-C131, C177-C228, C261-C298, C265-C302, C276-C288, C317-C351, C321-C356, and C329-C341. The Ig-like C2-type domain maps to 150-245; it reads RIAYLRKNFD…KRRSTTATVI (96 aa). N225 carries N-linked (GlcNAc...) asparagine glycosylation. 2 TSP type-1 domains span residues 249 to 303 and 305 to 357; these read NGGW…TMCP and DGGW…GLCM. Residue N350 is glycosylated (N-linked (GlcNAc...) asparagine). Residues 381–401 form a helical membrane-spanning segment; that stretch reads AGLVVAIFIVIILLMAVGIVV. Topologically, residues 402–943 are cytoplasmic; sequence YRRNCREFDT…MLVMATDGDC (542 aa). The ZU5 domain occupies 542–685; it reads NSVTGTFGSL…LGTYAFVGES (144 aa). Residues 688–836 are UPA domain; sequence RSAIKRLQLA…LEENVKSFDP (149 aa). The region spanning 863-941 is the Death domain; the sequence is KICNSLDAPN…EMMLVMATDG (79 aa).

This sequence belongs to the unc-5 family. Interacts (via extracellular domain) with flrt3 (via extracellular domain). Interacts with rnd1. In terms of processing, phosphorylated on cytoplasmic tyrosine residues. As to expression, in the developing visual system, it is expressed within the developing optic vesicles and later become restricted to the dorsal ciliary marginal zone, a site of retinoblast proliferation and differentiation.

The protein resides in the cell membrane. Functionally, plays a role in cell-cell adhesion during embryonic development. Receptor for netrin required for axon guidance. Mediates axon repulsion of neuronal growth cones in the developing nervous system upon ligand binding. The protein is Netrin receptor UNC5B-a (unc5b-a) of Xenopus laevis (African clawed frog).